The following is a 301-amino-acid chain: Bifunctional protein FolD (301 aa).

Residues 164 to 166 (GRS), Ser191, and Ile232 contribute to the NADP(+) site.

This sequence belongs to the tetrahydrofolate dehydrogenase/cyclohydrolase family. In terms of assembly, homodimer.

It catalyses the reaction (6R)-5,10-methylene-5,6,7,8-tetrahydrofolate + NADP(+) = (6R)-5,10-methenyltetrahydrofolate + NADPH. The catalysed reaction is (6R)-5,10-methenyltetrahydrofolate + H2O = (6R)-10-formyltetrahydrofolate + H(+). It functions in the pathway one-carbon metabolism; tetrahydrofolate interconversion. Functionally, catalyzes the oxidation of 5,10-methylenetetrahydrofolate to 5,10-methenyltetrahydrofolate and then the hydrolysis of 5,10-methenyltetrahydrofolate to 10-formyltetrahydrofolate. The chain is Bifunctional protein FolD from Borrelia garinii subsp. bavariensis (strain ATCC BAA-2496 / DSM 23469 / PBi) (Borreliella bavariensis).